A 627-amino-acid chain; its full sequence is MAKFKKDLTTKNKDTDRLSEEIDIPETKVNAFQAQQARIDEAQRDLLESNQQKSARKRFEENKTKEKVKKIFNNAKKKITRTKLKKLQDQVGNHIIMGTLPTIPNTLPTSKPTMQLSNDINRTVSEDEDGYLVPCKAQPQIYTVILPSQEIENHKSMDSDLWTLSSKTLGKEIDEVHPNIVLLSEKETEAKIVEDVKISNTTNSRGVFENTSKSFGQHNNFKLTQDLYGKDRKQYYKQEINSINSLDSAVLVESQQFKKTKSLEDIEDGSLSSQLKQTKYKSVLSPSSYVNDMFSNEHHQNSSIELPKLLHSSLSDTNSSLNDCINQLRCANTSDVYNLSYTLSNKTKQLSIDELKNTLEQMQTSPNINIVLPMLIRVQQDYVNEVAEIYQQTIEQRKQNPSEQAKNQEEVVAAYFTQEYDKLKIINSFRSLKTDSITNTSLASSVNIFGSNEDLSWDNTGDIGVGYRYGPEHSCPTPDDRLSSKLIDMSNKNTKNVKGLEEGVTIYDSIDSVADPLKSNDVSFEEINEALKQLSAAISETVINSSESKVQEDPEDILDGSILQAMLNSNNDQSIESLSLGSEEEQGQEETEASIQNAGDKKLLPVPASSNESTLLLSDCKKMNIYH.

The span at 1 to 20 (MAKFKKDLTTKNKDTDRLSE) shows a compositional bias: basic and acidic residues. Disordered stretches follow at residues 1-22 (MAKF…SEEI) and 578-606 (LSLG…LLPV). Over residues 582 to 592 (SEEEQGQEETE) the composition is skewed to acidic residues.

This is an uncharacterized protein from Rickettsia prowazekii (strain Madrid E).